Reading from the N-terminus, the 211-residue chain is 3-demethoxyubiquinol 3-hydroxylase (211 aa).

Fe cation is bound by residues Glu-60, Glu-90, His-93, Glu-142, Glu-174, and His-177.

This sequence belongs to the COQ7 family. Fe cation is required as a cofactor.

It is found in the cell membrane. The enzyme catalyses a 5-methoxy-2-methyl-3-(all-trans-polyprenyl)benzene-1,4-diol + AH2 + O2 = a 3-demethylubiquinol + A + H2O. It participates in cofactor biosynthesis; ubiquinone biosynthesis. Functionally, catalyzes the hydroxylation of 2-nonaprenyl-3-methyl-6-methoxy-1,4-benzoquinol during ubiquinone biosynthesis. The protein is 3-demethoxyubiquinol 3-hydroxylase of Acinetobacter baumannii (strain AB307-0294).